The sequence spans 53 residues: Antitoxin RelB3 (53 aa).

In terms of assembly, forms heterodimers with RelE and possibly a heterotetramer RelE3-RelB3(2)-RelE3 from 2 heterodimers. The heterotetramer is probably not very stable in solution.

Functionally, antitoxin component of a type II toxin-antitoxin (TA) system. Probably neutralizes the toxic activity of cognate toxin RelE. This is Antitoxin RelB3 (relB3) from Methanocaldococcus jannaschii (strain ATCC 43067 / DSM 2661 / JAL-1 / JCM 10045 / NBRC 100440) (Methanococcus jannaschii).